The chain runs to 178 residues: Matrix-remodeling-associated protein 7 (178 aa).

A helical transmembrane segment spans residues 7-27 (LLAALPALVTALALLLAWLLL). Residues 33-121 (RVPAPESTAS…AFSFKYSPGQ (89 aa)) form a disordered region. Pro residues predominate over residues 48-65 (APAPPEPPESCAPEPAPE). The segment covering 76–85 (PEESEAEEPA) has biased composition (acidic residues). Ser-79 and Ser-165 each carry phosphoserine.

It localises to the membrane. This chain is Matrix-remodeling-associated protein 7 (Mxra7), found in Mus musculus (Mouse).